Here is a 321-residue protein sequence, read N- to C-terminus: MDEYRELISVLPLDTVEYAFAYGSGAIQQKDENKAEKMVDFVVVTKDAQEFHKANIAKNPQHYSLLRLLGPKMLEKIQCNFAARVYYNTHVNVGKRKIKYGIISYENVKQDLLDWRWIYISGRLHKPVLDVIKPKDDMCDLVTENRRSALHSALLLLPESFTLKQLFHQIVGLSYTGDFRMIVGEDKNKIMKIVEGNYEELMRVYEPLMNDDARLSVMSPAKVIQDGSTTAIYHRLNLLPSEVLNQIQKNMNKAQKRQRDAEEVIFSLAHRHDVAATVETAIGGIIRPISFSQTAKNAFSAGMTRSVIYSLAKMSKFLKSK.

The protein belongs to the TAM41 family. The cofactor is Mg(2+). Requires Co(2+) as cofactor. Cu(2+) serves as cofactor.

It localises to the mitochondrion inner membrane. It catalyses the reaction a 1,2-diacyl-sn-glycero-3-phosphate + CTP + H(+) = a CDP-1,2-diacyl-sn-glycerol + diphosphate. It functions in the pathway phospholipid metabolism; CDP-diacylglycerol biosynthesis; CDP-diacylglycerol from sn-glycerol 3-phosphate: step 3/3. Catalyzes the formation of CDP-diacylglycerol (CDP-DAG) from phosphatidic acid (PA) in the mitochondrial inner membrane. Required for the biosynthesis of the dimeric phospholipid cardiolipin, which stabilizes supercomplexes of the mitochondrial respiratory chain in the mitochondrial inner membrane. In Caenorhabditis briggsae, this protein is Phosphatidate cytidylyltransferase, mitochondrial.